A 253-amino-acid polypeptide reads, in one-letter code: Imidazole glycerol phosphate synthase subunit HisF (253 aa).

Active-site residues include D11 and D130.

Belongs to the HisA/HisF family. As to quaternary structure, heterodimer of HisH and HisF.

The protein localises to the cytoplasm. It carries out the reaction 5-[(5-phospho-1-deoxy-D-ribulos-1-ylimino)methylamino]-1-(5-phospho-beta-D-ribosyl)imidazole-4-carboxamide + L-glutamine = D-erythro-1-(imidazol-4-yl)glycerol 3-phosphate + 5-amino-1-(5-phospho-beta-D-ribosyl)imidazole-4-carboxamide + L-glutamate + H(+). It participates in amino-acid biosynthesis; L-histidine biosynthesis; L-histidine from 5-phospho-alpha-D-ribose 1-diphosphate: step 5/9. In terms of biological role, IGPS catalyzes the conversion of PRFAR and glutamine to IGP, AICAR and glutamate. The HisF subunit catalyzes the cyclization activity that produces IGP and AICAR from PRFAR using the ammonia provided by the HisH subunit. The chain is Imidazole glycerol phosphate synthase subunit HisF from Clostridium botulinum (strain Langeland / NCTC 10281 / Type F).